The following is a 1530-amino-acid chain: Coiled-coil domain-containing protein 141 (1530 aa).

Residue threonine 91 is modified to Phosphothreonine. 3 coiled-coil regions span residues 642–706 (VKNE…EALM), 758–783 (VKEKSQQLKDLIHFHQKQKERIQDYE), and 861–970 (SNVS…KTSD). Positions 1210 to 1241 (SPDDISLPPLPGSPESPLAPSDMEVEEPVSSS) are disordered. An Ig-like domain is found at 1409–1530 (PNFSRLLSNV…VSLMYWLLTQ (122 aa)).

Interacts with DISC1. Interacts preferentially with phosphorylated forms of myosin regulatory light chain (MRLC). Interacts (via the N-terminal region) with HDAC6; inhibits the deacetylase activity of HDAC6. Interacts with KIBRA (via the C-terminal region); retains AMPAR in the cytosol after internalization. Ubiquitinated and degradated by the CDC20-APC/C pathway. During brain development, CDC20-APC/C complex degrades CCDC141 after centrosome translocation into the dilated area. CCDC141 is restabilized in the dilation until the centrosome enters the dilation, at which point it is once again immediately destabilized by CDC20-APC/C complex. The oscillatory regulation of CCDC141 protein is needed for proper cortical migration. Post-translationally, phosphorylation at Thr-91 by PLK1 affects CCDC141 degradation.

The protein resides in the cytoplasm. The protein localises to the cytoskeleton. It is found in the microtubule organizing center. Its subcellular location is the centrosome. In terms of biological role, plays a critical role in cortical radial and GnRH neurons migration during brain development. Regulates cortical radial migration by negatively controlling the activity of histone deacetylase 6 (HDAC6) and promotes centrosome maturation. CAMDI is required for dilation formation of cortical neurons during radial migration. Plays a critical role in learning and memory performance through regulation of AMPA-selective glutamate receptors (AMPARs) cell surface expression in competition with KIBRA. The sequence is that of Coiled-coil domain-containing protein 141 (CCDC141) from Homo sapiens (Human).